The following is a 61-amino-acid chain: Probable tautomerase SSP1389 (61 aa).

Catalysis depends on P2, which acts as the Proton acceptor; via imino nitrogen.

It belongs to the 4-oxalocrotonate tautomerase family.

The sequence is that of Probable tautomerase SSP1389 from Staphylococcus saprophyticus subsp. saprophyticus (strain ATCC 15305 / DSM 20229 / NCIMB 8711 / NCTC 7292 / S-41).